A 159-amino-acid chain; its full sequence is Phosphopantetheine adenylyltransferase (159 aa).

A substrate-binding site is contributed by Thr-10. Residues 10 to 11 (TF) and His-18 each bind ATP. 3 residues coordinate substrate: Lys-42, Leu-74, and Arg-88. ATP-binding positions include 89–91 (GLR), Glu-99, and 124–130 (YSFISSS).

This sequence belongs to the bacterial CoaD family. In terms of assembly, homohexamer. Mg(2+) serves as cofactor.

Its subcellular location is the cytoplasm. The catalysed reaction is (R)-4'-phosphopantetheine + ATP + H(+) = 3'-dephospho-CoA + diphosphate. It functions in the pathway cofactor biosynthesis; coenzyme A biosynthesis; CoA from (R)-pantothenate: step 4/5. In terms of biological role, reversibly transfers an adenylyl group from ATP to 4'-phosphopantetheine, yielding dephospho-CoA (dPCoA) and pyrophosphate. In Campylobacter hominis (strain ATCC BAA-381 / DSM 21671 / CCUG 45161 / LMG 19568 / NCTC 13146 / CH001A), this protein is Phosphopantetheine adenylyltransferase.